The primary structure comprises 1271 residues: ATP-dependent helicase/nuclease subunit A (1271 aa).

Positions 3-476 (TKWTEEQELA…IMLYKNFRSR (474 aa)) constitute a UvrD-like helicase ATP-binding domain. 24 to 31 (AAAGSGKT) is an ATP binding site. Residues 528-824 (IENLKVAGDI…RIMSIHKSKG (297 aa)) form the UvrD-like helicase C-terminal domain.

It belongs to the helicase family. AddA subfamily. Heterodimer of AddA and AddB/RexB. Mg(2+) serves as cofactor.

It carries out the reaction Couples ATP hydrolysis with the unwinding of duplex DNA by translocating in the 3'-5' direction.. It catalyses the reaction ATP + H2O = ADP + phosphate + H(+). Functionally, the heterodimer acts as both an ATP-dependent DNA helicase and an ATP-dependent, dual-direction single-stranded exonuclease. Recognizes the chi site generating a DNA molecule suitable for the initiation of homologous recombination. The AddA nuclease domain is required for chi fragment generation; this subunit has the helicase and 3' -&gt; 5' nuclease activities. This Clostridium perfringens (strain ATCC 13124 / DSM 756 / JCM 1290 / NCIMB 6125 / NCTC 8237 / Type A) protein is ATP-dependent helicase/nuclease subunit A.